Reading from the N-terminus, the 240-residue chain is Inhibitor of growth protein 5 (240 aa).

The segment at 115–165 (MDGSDFESTGARSLKKGRSQKEKRSSRGRGRRTSEEDTPKKKKHKSGSEFT) is disordered. Residue S118 is modified to Phosphoserine. Residue R126 is modified to Omega-N-methylarginine. Residues 186–235 (PTYCLCHQVSYGEMIGCDNPDCPIEWFHFACVDLTTKPKGKWFCPRCVQE) form a PHD-type zinc finger. C189, C191, C202, C207, H213, C216, C229, and C232 together coordinate Zn(2+).

The protein belongs to the ING family. As to quaternary structure, component of the HBO1 complex composed of KAT7/HBO1, MEAF6, ING5, and one scaffold subunit: complexes containing BRPF scaffold (BRPF1, BRD1/BRPF2 or BRPF3) direct KAT7/HBO1 specificity towards H3K14ac, while complexes containing JADE scaffold (JADE1, JADE2 and JADE3) mediate acetylation of histone H4. Component of the MOZ/MORF complex composed at least of ING5, KAT6A, KAT6B, MEAF6 and one of BRPF1, BRD1/BRPF2 and BRPF3. Interacts with H3K4me3 and to a lesser extent with H3K4me2. Interacts with EP300 and p53/TP53. Interacts with INCA1.

It localises to the nucleus. It is found in the chromosome. Its function is as follows. Component of the HBO1 complex, which specifically mediates acetylation of histone H3 at 'Lys-14' (H3K14ac) and, to a lower extent, acetylation of histone H4. Component of the MOZ/MORF complex which has a histone H3 acetyltransferase activity. Through chromatin acetylation it may regulate DNA replication and may function as a transcriptional coactivator. Inhibits cell growth, induces a delay in S-phase progression and enhances Fas-induced apoptosis in an INCA1-dependent manner. This Mus musculus (Mouse) protein is Inhibitor of growth protein 5 (Ing5).